The following is a 473-amino-acid chain: Photosystem II CP43 reaction center protein (473 aa).

The propeptide occupies 1 to 14 (MKTLYSLRRFYHVE). At Thr15 the chain carries N-acetylthreonine. Thr15 is modified (phosphothreonine). The next 5 membrane-spanning stretches (helical) occupy residues 69 to 93 (LFEV…PHLA), 134 to 155 (LLGP…KDRN), 178 to 200 (KALY…RKIT), 255 to 275 (KPFA…LSYS), and 291 to 312 (WFNN…ASQA). Glu367 contributes to the [CaMn4O5] cluster binding site. A helical membrane pass occupies residues 447–471 (RARAAAAGFEKGIDRDFEPVLSMTP).

Belongs to the PsbB/PsbC family. PsbC subfamily. In terms of assembly, PSII is composed of 1 copy each of membrane proteins PsbA, PsbB, PsbC, PsbD, PsbE, PsbF, PsbH, PsbI, PsbJ, PsbK, PsbL, PsbM, PsbT, PsbX, PsbY, PsbZ, Psb30/Ycf12, at least 3 peripheral proteins of the oxygen-evolving complex and a large number of cofactors. It forms dimeric complexes. Binds multiple chlorophylls and provides some of the ligands for the Ca-4Mn-5O cluster of the oxygen-evolving complex. It may also provide a ligand for a Cl- that is required for oxygen evolution. PSII binds additional chlorophylls, carotenoids and specific lipids. serves as cofactor.

The protein localises to the plastid. It localises to the chloroplast thylakoid membrane. One of the components of the core complex of photosystem II (PSII). It binds chlorophyll and helps catalyze the primary light-induced photochemical processes of PSII. PSII is a light-driven water:plastoquinone oxidoreductase, using light energy to abstract electrons from H(2)O, generating O(2) and a proton gradient subsequently used for ATP formation. In Draba nemorosa (Woodland whitlowgrass), this protein is Photosystem II CP43 reaction center protein.